A 57-amino-acid polypeptide reads, in one-letter code: Large ribosomal subunit protein bL32B (57 aa).

Belongs to the bacterial ribosomal protein bL32 family.

This is Large ribosomal subunit protein bL32B from Listeria welshimeri serovar 6b (strain ATCC 35897 / DSM 20650 / CCUG 15529 / CIP 8149 / NCTC 11857 / SLCC 5334 / V8).